The chain runs to 357 residues: 2-oxoglutarate-dependent dioxygenase 11 (357 aa).

Residues 207–307 (QPRGLRMAYY…RISAALFHYP (101 aa)) form the Fe2OG dioxygenase domain. Positions 231, 233, and 288 each coordinate Fe cation. 2-oxoglutarate is bound at residue arginine 298.

It belongs to the iron/ascorbate-dependent oxidoreductase family. It depends on Fe(2+) as a cofactor. The cofactor is L-ascorbate. Expressed in shoots.

The protein resides in the cytoplasm. The catalysed reaction is melatonin + 2-oxoglutarate + O2 = 2-hydroxymelatonin + succinate + CO2. Involved in melatonin degradation. Catalyzes the hydroxylation of melatonin to produce 2-hydroxymelatonin. The sequence is that of 2-oxoglutarate-dependent dioxygenase 11 from Oryza sativa subsp. japonica (Rice).